Consider the following 372-residue polypeptide: Putative glutamate--cysteine ligase 2 (372 aa).

Belongs to the glutamate--cysteine ligase type 2 family. YbdK subfamily. In terms of assembly, homodimer.

It catalyses the reaction L-cysteine + L-glutamate + ATP = gamma-L-glutamyl-L-cysteine + ADP + phosphate + H(+). Its function is as follows. ATP-dependent carboxylate-amine ligase which exhibits weak glutamate--cysteine ligase activity. This chain is Putative glutamate--cysteine ligase 2, found in Citrobacter koseri (strain ATCC BAA-895 / CDC 4225-83 / SGSC4696).